The primary structure comprises 673 residues: DNA ligase (673 aa).

Residues 34–38 (DAEYD), 83–84 (SL), and Glu-116 each bind NAD(+). The active-site N6-AMP-lysine intermediate is Lys-118. 4 residues coordinate NAD(+): Arg-139, Glu-176, Lys-293, and Lys-317. Cys-411, Cys-414, Cys-429, and Cys-435 together coordinate Zn(2+). In terms of domain architecture, BRCT spans 595–673 (NQQNPFFGKT…EDEFLKWVNS (79 aa)).

The protein belongs to the NAD-dependent DNA ligase family. LigA subfamily. The cofactor is Mg(2+). Mn(2+) serves as cofactor.

The enzyme catalyses NAD(+) + (deoxyribonucleotide)n-3'-hydroxyl + 5'-phospho-(deoxyribonucleotide)m = (deoxyribonucleotide)n+m + AMP + beta-nicotinamide D-nucleotide.. Its function is as follows. DNA ligase that catalyzes the formation of phosphodiester linkages between 5'-phosphoryl and 3'-hydroxyl groups in double-stranded DNA using NAD as a coenzyme and as the energy source for the reaction. It is essential for DNA replication and repair of damaged DNA. The polypeptide is DNA ligase (Legionella pneumophila subsp. pneumophila (strain Philadelphia 1 / ATCC 33152 / DSM 7513)).